Reading from the N-terminus, the 196-residue chain is Large ribosomal subunit protein bL17 (196 aa).

Residues 133 to 196 are disordered; it reads AAKRDADKKE…KPAAEEKDAK (64 aa). Positions 134–143 are enriched in basic and acidic residues; that stretch reads AKRDADKKEA. Residues 152 to 164 are compositionally biased toward acidic residues; that stretch reads EVAETEAAPEAEA. A compositionally biased stretch (basic and acidic residues) spans 184–196; the sequence is AAEKPAAEEKDAK.

Belongs to the bacterial ribosomal protein bL17 family. As to quaternary structure, part of the 50S ribosomal subunit. Contacts protein L32.

The chain is Large ribosomal subunit protein bL17 from Arthrobacter sp. (strain FB24).